We begin with the raw amino-acid sequence, 139 residues long: MVQLSTYLPSPPSTNMSCTFSSVMSVCFMTMSATVLPICGKAVTSHLRSNSCLTRVSSFLNTSRPQLATFPDSRASSSTSSSMHVPLPTLTILTPSLHQAKLLRLIILFVEAVLGKAKMIKSAFFQVFGSSRSEWYLAL.

The helical transmembrane segment at Ser-22–Ile-38 threads the bilayer.

The protein resides in the membrane. This is an uncharacterized protein from Saccharomyces cerevisiae (strain ATCC 204508 / S288c) (Baker's yeast).